Reading from the N-terminus, the 597-residue chain is DNA mismatch repair protein MutL (597 aa).

This sequence belongs to the DNA mismatch repair MutL/HexB family.

In terms of biological role, this protein is involved in the repair of mismatches in DNA. It is required for dam-dependent methyl-directed DNA mismatch repair. May act as a 'molecular matchmaker', a protein that promotes the formation of a stable complex between two or more DNA-binding proteins in an ATP-dependent manner without itself being part of a final effector complex. This chain is DNA mismatch repair protein MutL, found in Rhodopseudomonas palustris (strain BisB5).